We begin with the raw amino-acid sequence, 419 residues long: UDP-N-acetylglucosamine 1-carboxyvinyltransferase (419 aa).

Phosphoenolpyruvate is bound at residue K22 to N23. R92 contacts UDP-N-acetyl-alpha-D-glucosamine. C116 acts as the Proton donor in catalysis. C116 carries the 2-(S-cysteinyl)pyruvic acid O-phosphothioketal modification. Residues R121–L125, D306, and I328 contribute to the UDP-N-acetyl-alpha-D-glucosamine site.

The protein belongs to the EPSP synthase family. MurA subfamily.

Its subcellular location is the cytoplasm. It carries out the reaction phosphoenolpyruvate + UDP-N-acetyl-alpha-D-glucosamine = UDP-N-acetyl-3-O-(1-carboxyvinyl)-alpha-D-glucosamine + phosphate. The protein operates within cell wall biogenesis; peptidoglycan biosynthesis. Cell wall formation. Adds enolpyruvyl to UDP-N-acetylglucosamine. Target for the antibiotic fosfomycin. Involved in heteroresistance to antibiotic fosfomycin. Heteroresistance is the ability of a clonal population to grow one or several subpopulations at a frequency of 10(-7) to 10(-3) in the presence of a higher antibiotic concentration than that predicted to be effective by measurement of the minimum inhibitory concentration (MIC). The sequence is that of UDP-N-acetylglucosamine 1-carboxyvinyltransferase from Streptococcus pneumoniae serotype 2 (strain D39 / NCTC 7466).